Reading from the N-terminus, the 259-residue chain is Binding partner of ACD11 1 (259 aa).

The region spanning 6-77 is the RRM domain; the sequence is RSVKVGNLSS…QSVIIELAPN (72 aa). Positions 219–259 are disordered; that stretch reads GEVGQKTKEKVEAEQPSQPAQSQQQLPEGYSPIHSSEYSKN. Residues 232–243 show a composition bias toward low complexity; sequence EQPSQPAQSQQQ.

As to quaternary structure, interacts with ACD11, PR1F2 and PR1F3.

It is found in the cytoplasm. It localises to the membrane. The sequence is that of Binding partner of ACD11 1 (BPA1) from Arabidopsis thaliana (Mouse-ear cress).